Consider the following 176-residue polypeptide: Urease accessory protein UreE (176 aa).

Residues 147–176 (AGAYQQGGGHSHGHAHSHSHEKPHSHTHNH) are disordered.

The protein belongs to the UreE family.

The protein localises to the cytoplasm. In terms of biological role, involved in urease metallocenter assembly. Binds nickel. Probably functions as a nickel donor during metallocenter assembly. This Alcanivorax borkumensis (strain ATCC 700651 / DSM 11573 / NCIMB 13689 / SK2) protein is Urease accessory protein UreE.